Here is a 249-residue protein sequence, read N- to C-terminus: Basigin (249 aa).

The 82-residue stretch at A1–G82 folds into the Ig-like C2-type domain. At A1 to A187 the chain is on the extracellular side. Intrachain disulfides connect C20–C66 and C105–C165. Residues N23, N132, and N166 are each glycosylated (N-linked (GlcNAc...) asparagine). The region spanning P84–T179 is the Ig-like V-type domain. Residues A188–I208 traverse the membrane as a helical segment. Residues Y209–T249 lie on the Cytoplasmic side of the membrane. Residues D216–T249 form a disordered region. T218 is subject to Phosphothreonine. S232 carries the post-translational modification Phosphoserine.

In terms of assembly, homooligomer. Interacts with VEGFA, KDR/VEGFR2, PPIA/CYPA, SLC16A12, SLC16A11, ATP1B2, MAG, L1CAM and AJAP1. Interacts with SLC16A3; interaction mediates SLC16A3 targeting to the plasma membrane. Interacts with SLC16A1; interaction mediates SLC16A1 targeting to the plasma membrane. Interacts with PPIL2; regulates BSG transport to the cell membrane. Interacts with XKR8; promoting its localization at the cell membrane. Interacts with SLC16A6; this interaction mediates targeting to the plasma membrane.

It is found in the cell membrane. It localises to the endoplasmic reticulum membrane. Its subcellular location is the basolateral cell membrane. Signaling receptor for cyclophilins, essential for PPIA/CYPA and PPIB/CYPB-dependent signaling related to chemotaxis and adhesion of immune cells. Plays an important role in targeting the monocarboxylate transporters SLC16A1/GLUT1, SLC16A3, SLC16A8, SLC16A11 and SLC16A12 to the plasma membrane. Acts as a coreceptor for vascular endothelial growth factor receptor 2 (KDR/VEGFR2) in endothelial cells enhancing its VEGFA-mediated activation and downstream signaling. Promotes angiogenesis through EPAS1/HIF2A-mediated up-regulation of VEGFA and KDR/VEGFR2 in endothelial cells. The sequence is that of Basigin (BSG) from Cricetulus griseus (Chinese hamster).